A 206-amino-acid chain; its full sequence is MAKIIGISGGSGSGKTTVVSKISEFIPEFVLISQDNYYKSVGDYEHEFSKVNFDHPDAFDNNLFYEHLKNLKKNSPIDMPLYDFINHKRQLKTVLVVPTPVVIVEGIMIFVEERVRNLIDLKIYIDTPNDIRFIRRLRRDISKRGRTVESVIDQYLNTTRWGYYRFIEPTKEYADLIIPEGGHNDKALYVLSTFLKSLSKEGLDFT.

9-16 (GGSGSGKT) is a binding site for ATP.

The protein belongs to the uridine kinase family. In terms of assembly, monomer.

Its subcellular location is the cytoplasm. The catalysed reaction is uridine + ATP = UMP + ADP + H(+). It catalyses the reaction cytidine + ATP = CMP + ADP + H(+). It participates in pyrimidine metabolism; CTP biosynthesis via salvage pathway; CTP from cytidine: step 1/3. The protein operates within pyrimidine metabolism; UMP biosynthesis via salvage pathway; UMP from uridine: step 1/1. This Borreliella burgdorferi (strain ATCC 35210 / DSM 4680 / CIP 102532 / B31) (Borrelia burgdorferi) protein is Uridine kinase (udk).